Consider the following 92-residue polypeptide: Small ribosomal subunit protein uS19 (92 aa).

Belongs to the universal ribosomal protein uS19 family.

Functionally, protein S19 forms a complex with S13 that binds strongly to the 16S ribosomal RNA. This is Small ribosomal subunit protein uS19 from Psychromonas ingrahamii (strain DSM 17664 / CCUG 51855 / 37).